The primary structure comprises 76 residues: Large ribosomal subunit protein uL29 (76 aa).

Belongs to the universal ribosomal protein uL29 family.

In Corynebacterium kroppenstedtii (strain DSM 44385 / JCM 11950 / CIP 105744 / CCUG 35717), this protein is Large ribosomal subunit protein uL29.